The following is a 92-amino-acid chain: Exodeoxyribonuclease 7 small subunit (92 aa).

The segment covering 71–84 (AESAGTAKSAVAAD) has biased composition (low complexity). A disordered region spans residues 71 to 92 (AESAGTAKSAVAADSRGAADSA).

It belongs to the XseB family. Heterooligomer composed of large and small subunits.

It is found in the cytoplasm. It carries out the reaction Exonucleolytic cleavage in either 5'- to 3'- or 3'- to 5'-direction to yield nucleoside 5'-phosphates.. Functionally, bidirectionally degrades single-stranded DNA into large acid-insoluble oligonucleotides, which are then degraded further into small acid-soluble oligonucleotides. This Leifsonia xyli subsp. xyli (strain CTCB07) protein is Exodeoxyribonuclease 7 small subunit.